The primary structure comprises 424 residues: UDP-N-acetylglucosamine 1-carboxyvinyltransferase (424 aa).

22 to 23 serves as a coordination point for phosphoenolpyruvate; the sequence is KN. Arginine 93 lines the UDP-N-acetyl-alpha-D-glucosamine pocket. Cysteine 117 functions as the Proton donor in the catalytic mechanism. Residue cysteine 117 is modified to 2-(S-cysteinyl)pyruvic acid O-phosphothioketal. UDP-N-acetyl-alpha-D-glucosamine-binding positions include 122-126, aspartate 307, and valine 329; that span reads RPIDL.

This sequence belongs to the EPSP synthase family. MurA subfamily.

It localises to the cytoplasm. It carries out the reaction phosphoenolpyruvate + UDP-N-acetyl-alpha-D-glucosamine = UDP-N-acetyl-3-O-(1-carboxyvinyl)-alpha-D-glucosamine + phosphate. It participates in cell wall biogenesis; peptidoglycan biosynthesis. Functionally, cell wall formation. Adds enolpyruvyl to UDP-N-acetylglucosamine. The protein is UDP-N-acetylglucosamine 1-carboxyvinyltransferase of Chlorobium limicola (strain DSM 245 / NBRC 103803 / 6330).